We begin with the raw amino-acid sequence, 237 residues long: 2,3-bisphosphoglycerate-dependent phosphoglycerate mutase (237 aa).

Substrate-binding positions include 8 to 15 (RHGQSQWN), 21 to 22 (TG), R60, 87 to 90 (ERHY), K98, 114 to 115 (RR), and 180 to 181 (GN). Catalysis depends on H9, which acts as the Tele-phosphohistidine intermediate. E87 serves as the catalytic Proton donor/acceptor.

The protein belongs to the phosphoglycerate mutase family. BPG-dependent PGAM subfamily. Homodimer.

It carries out the reaction (2R)-2-phosphoglycerate = (2R)-3-phosphoglycerate. It functions in the pathway carbohydrate degradation; glycolysis; pyruvate from D-glyceraldehyde 3-phosphate: step 3/5. Catalyzes the interconversion of 2-phosphoglycerate and 3-phosphoglycerate. This chain is 2,3-bisphosphoglycerate-dependent phosphoglycerate mutase, found in Caulobacter sp. (strain K31).